The following is a 101-amino-acid chain: NADH-quinone oxidoreductase subunit K (101 aa).

A run of 3 helical transmembrane segments spans residues 4-24, 30-50, and 62-82; these read LGHMLALGAVLFAISLAGIFL, IVLLMSIELMLLSVNVNFVAF, and FVFFILTVAAAEAAIGLAILV.

It belongs to the complex I subunit 4L family. As to quaternary structure, NDH-1 is composed of 14 different subunits. Subunits NuoA, H, J, K, L, M, N constitute the membrane sector of the complex.

The protein resides in the cell inner membrane. It carries out the reaction a quinone + NADH + 5 H(+)(in) = a quinol + NAD(+) + 4 H(+)(out). In terms of biological role, NDH-1 shuttles electrons from NADH, via FMN and iron-sulfur (Fe-S) centers, to quinones in the respiratory chain. The immediate electron acceptor for the enzyme in this species is believed to be ubiquinone. Couples the redox reaction to proton translocation (for every two electrons transferred, four hydrogen ions are translocated across the cytoplasmic membrane), and thus conserves the redox energy in a proton gradient. This Stenotrophomonas maltophilia (strain R551-3) protein is NADH-quinone oxidoreductase subunit K.